A 659-amino-acid chain; its full sequence is Exoribonuclease 2 (659 aa).

The RNB domain occupies 189-531; sequence RENLTALHFV…NHRLIKAVLA (343 aa). The region spanning 576–658 is the S1 motif domain; it reads NAEFEAEVQD…ATRSIVGEIL (83 aa).

It belongs to the RNR ribonuclease family. RNase II subfamily.

The protein localises to the cytoplasm. The catalysed reaction is Exonucleolytic cleavage in the 3'- to 5'-direction to yield nucleoside 5'-phosphates.. In terms of biological role, involved in mRNA degradation. Hydrolyzes single-stranded polyribonucleotides processively in the 3' to 5' direction. The protein is Exoribonuclease 2 of Haemophilus influenzae (strain PittGG).